Consider the following 122-residue polypeptide: Large ribosomal subunit protein uL14c (122 aa).

It belongs to the universal ribosomal protein uL14 family. Part of the 50S ribosomal subunit.

The protein localises to the plastid. The protein resides in the chloroplast. Binds to 23S rRNA. The chain is Large ribosomal subunit protein uL14c from Lactuca sativa (Garden lettuce).